Here is a 405-residue protein sequence, read N- to C-terminus: uncharacterized protein (405 aa).

The next 13 membrane-spanning stretches (helical) occupy residues 19–39 (IVSI…PLAV), 48–68 (MGFS…ATLL), 85–105 (IVVF…LADI), 106–126 (ASAW…ILGI), 129–149 (SFAG…LHIG), 156–176 (GIVT…CYAW), 178–198 (GLQG…LLAL), 224–244 (GMAL…ITLF), 252–272 (GAAF…LLFP), 283–303 (VAMI…TAAM), 309–329 (IGVL…GVVA), 344–364 (TYTV…GLVM), and 366–386 (WAGV…ALLL).

The protein belongs to the major facilitator superfamily. YhhS family.

The protein resides in the cell inner membrane. This is an uncharacterized protein from Salmonella enteritidis PT4 (strain P125109).